Here is a 380-residue protein sequence, read N- to C-terminus: MRIGIVAGELSGDQLGGTLVEALKQKYPNAIIEGIGGPKMAAAGFKSLYPMDALSLIGFLEIISKGLRILSIRRKIINYFKQNKPDIFIGIDAPDFNLTVEKELRSAGIKTIHYVSPKIWVWREYRIKKIRKATDKILAILPFETEYYKNRHKFEAIYVGHPLAKNIPIHIDRAKYRDKLGLKGSSLPILSVLPGSRTTEVSRLLPLFLLALQKLVDAGYKFKAIMPLAKPSLKPLFAKYKEQIDSLGIEVFETNSHDVLKASDLSLLASGTATLEAMLCKLPMVVGYKLSWLSALIGRMLIGNHSYWAFPNILHKNEIIKELIQEDCTVDNLFSELKRLFDDKRRNDYIVEEFEKIHKEMVIDTESKIIQVLDTMIEKS.

Belongs to the LpxB family.

It catalyses the reaction a lipid X + a UDP-2-N,3-O-bis[(3R)-3-hydroxyacyl]-alpha-D-glucosamine = a lipid A disaccharide + UDP + H(+). Its pathway is bacterial outer membrane biogenesis; LPS lipid A biosynthesis. Functionally, condensation of UDP-2,3-diacylglucosamine and 2,3-diacylglucosamine-1-phosphate to form lipid A disaccharide, a precursor of lipid A, a phosphorylated glycolipid that anchors the lipopolysaccharide to the outer membrane of the cell. This Francisella tularensis subsp. tularensis (strain FSC 198) protein is Lipid-A-disaccharide synthase.